We begin with the raw amino-acid sequence, 289 residues long: Shikimate dehydrogenase (NADP(+)) (289 aa).

Shikimate-binding positions include 22-24 and Thr-69; that span reads SRS. Lys-73 serves as the catalytic Proton acceptor. Glu-85 serves as a coordination point for NADP(+). Positions 94 and 109 each coordinate shikimate. NADP(+) is bound by residues 134–138, 158–163, and Ile-226; these read GAGGA and NRTLSR. Tyr-228 contacts shikimate. Gly-249 serves as a coordination point for NADP(+).

The protein belongs to the shikimate dehydrogenase family. In terms of assembly, homodimer.

It catalyses the reaction shikimate + NADP(+) = 3-dehydroshikimate + NADPH + H(+). Its pathway is metabolic intermediate biosynthesis; chorismate biosynthesis; chorismate from D-erythrose 4-phosphate and phosphoenolpyruvate: step 4/7. Involved in the biosynthesis of the chorismate, which leads to the biosynthesis of aromatic amino acids. Catalyzes the reversible NADPH linked reduction of 3-dehydroshikimate (DHSA) to yield shikimate (SA). This is Shikimate dehydrogenase (NADP(+)) from Brucella ovis (strain ATCC 25840 / 63/290 / NCTC 10512).